The following is a 1184-amino-acid chain: PR domain zinc finger protein 10 (1184 aa).

Residues 122–162 are disordered; sequence LDAKEEEEEEEDEDEDTEEEEEEDAEDTDVDDWQPDPPRPF. Acidic residues predominate over residues 125–155; that stretch reads KEEEEEEEDEDEDTEEEEEEDAEDTDVDDWQ. Positions 202 to 320 constitute an SET domain; sequence LPLVLYIDRF…PKQELKVWYA (119 aa). Residues 221–325 form an N-terminal PR domain; essential for transcriptional activator activity region; that stretch reads IPKRTQFGPV…KVWYAASYAE (105 aa). The C2H2-type 1 zinc-finger motif lies at 349 to 371; the sequence is WPCYECNRRFISSEQLQQHLNSH. Residue lysine 374 forms a Glycyl lysine isopeptide (Lys-Gly) (interchain with G-Cter in SUMO2) linkage. Over residues 381 to 401 the composition is skewed to basic residues; sequence TRGRGRGRGKRRFGPGRRPGR. Residues 381 to 405 are disordered; the sequence is TRGRGRGRGKRRFGPGRRPGRPPKF. The residue at position 418 (serine 418) is a Phosphoserine. Position 422 is a phosphothreonine (threonine 422). Residues 444–487 form a disordered region; that stretch reads GLDQPEQASIPIPQLPQETPPSLEQEPETHTLHLQPQQEESLVP. The span at 475 to 487 shows a compositional bias: polar residues; the sequence is LHLQPQQEESLVP. 8 C2H2-type zinc fingers span residues 520-542, 550-572, 578-600, 606-629, 634-656, 662-685, 717-740, and 850-873; these read FKCL…LRFH, LTCD…MKLH, YSCI…VAIH, FTCP…RSFH, YQCT…MLRH, FLCS…QRMH, FKCR…SKRH, and VCCP…RKKH. The segment at 917-1164 is C-terminal glutamine-rich region; essential for transcriptional activator activity; sequence QAMTELSQTL…TGPSQQQTTQ (248 aa). Residues 1004-1054 form a disordered region; the sequence is EPAPAAPSASQVAGQPLSPSAQQVQQGLSPSHIQGSSSTQGQALQQQQNSS. Residues 1014-1036 show a composition bias toward polar residues; sequence QVAGQPLSPSAQQVQQGLSPSHI. The segment covering 1037–1054 has biased composition (low complexity); that stretch reads QGSSSTQGQALQQQQNSS.

This sequence belongs to the class V-like SAM-binding methyltransferase superfamily. As to expression, present in brain, liver, kidney, spleen and thymus (at protein level).

It is found in the nucleus. Its function is as follows. Transcriptional activator, essential for early embryonic development and survival of embryonic stem cells (ESCs). Supports cell growth and survival during early development by transcriptionally activating the expression of the translation initiation factor EIF3B, to sustain global translation. Activates the transcription of FLNC. The protein is PR domain zinc finger protein 10 (Prdm10) of Mus musculus (Mouse).